The following is an 872-amino-acid chain: UPF0182 protein Noc_0961 (872 aa).

7 helical membrane passes run 8-28 (FLIL…AGFE), 56-76 (LVVF…NFWV), 109-129 (SLWI…WPLF), 159-179 (LFSF…FLLL), 207-227 (WHLS…FFLQ), 254-274 (PFIW…LLFI), and 282-302 (TLAV…FHFL).

The protein belongs to the UPF0182 family.

The protein resides in the cell membrane. This chain is UPF0182 protein Noc_0961, found in Nitrosococcus oceani (strain ATCC 19707 / BCRC 17464 / JCM 30415 / NCIMB 11848 / C-107).